The sequence spans 283 residues: Acetyl-coenzyme A carboxylase carboxyl transferase subunit beta (283 aa).

Residues 23 to 283 form the CoA carboxyltransferase N-terminal domain; the sequence is LWIKCPSCSE…DFLMAGKAAA (261 aa). Residues Cys-27, Cys-30, Cys-46, and Cys-49 each coordinate Zn(2+). Residues 27–49 form a C4-type zinc finger; that stretch reads CPSCSEMLFTKEYEDNLSVCPHC.

It belongs to the AccD/PCCB family. Acetyl-CoA carboxylase is a heterohexamer composed of biotin carboxyl carrier protein (AccB), biotin carboxylase (AccC) and two subunits each of ACCase subunit alpha (AccA) and ACCase subunit beta (AccD). Requires Zn(2+) as cofactor.

Its subcellular location is the cytoplasm. It catalyses the reaction N(6)-carboxybiotinyl-L-lysyl-[protein] + acetyl-CoA = N(6)-biotinyl-L-lysyl-[protein] + malonyl-CoA. The protein operates within lipid metabolism; malonyl-CoA biosynthesis; malonyl-CoA from acetyl-CoA: step 1/1. In terms of biological role, component of the acetyl coenzyme A carboxylase (ACC) complex. Biotin carboxylase (BC) catalyzes the carboxylation of biotin on its carrier protein (BCCP) and then the CO(2) group is transferred by the transcarboxylase to acetyl-CoA to form malonyl-CoA. This Novosphingobium aromaticivorans (strain ATCC 700278 / DSM 12444 / CCUG 56034 / CIP 105152 / NBRC 16084 / F199) protein is Acetyl-coenzyme A carboxylase carboxyl transferase subunit beta.